The sequence spans 130 residues: MGDYIVVLEAPIVVKDVESVEEAIEKAVNKVVSALEREKLDFVRVELGYSQCPVCGAHFESAFVVGNVGLVGIYLTLKVFNAQSLEHAERIAKAVVGKALKKVPLKLFEIKELHNGREGGGITFEEEYQG.

It belongs to the UPF0212 family.

This is UPF0212 protein PF1486 from Pyrococcus furiosus (strain ATCC 43587 / DSM 3638 / JCM 8422 / Vc1).